A 270-amino-acid chain; its full sequence is 27 kDa core protein (270 aa).

It belongs to the chordopoxvirinae D3 family.

The protein localises to the virion. Late protein which is part of a large complex required for early virion morphogenesis. This complex participates in the formation of virosomes and the incorporation of virosomal contents into nascent immature virions. The protein is 27 kDa core protein of Vertebrata (FPV).